A 31-amino-acid chain; its full sequence is MSTIISYFGFLLASIIFTLILFISLSKIQLI.

The helical transmembrane segment at 3-23 threads the bilayer; sequence TIISYFGFLLASIIFTLILFI.

The protein belongs to the PetL family. As to quaternary structure, the 4 large subunits of the cytochrome b6-f complex are cytochrome b6, subunit IV (17 kDa polypeptide, PetD), cytochrome f and the Rieske protein, while the 4 small subunits are PetG, PetL, PetM and PetN. The complex functions as a dimer.

Its subcellular location is the plastid. It localises to the chloroplast thylakoid membrane. Functionally, component of the cytochrome b6-f complex, which mediates electron transfer between photosystem II (PSII) and photosystem I (PSI), cyclic electron flow around PSI, and state transitions. PetL is important for photoautotrophic growth as well as for electron transfer efficiency and stability of the cytochrome b6-f complex. The sequence is that of Cytochrome b6-f complex subunit 6 from Abies homolepis (Nikko fir).